The chain runs to 225 residues: Fibronectin type III domain-containing protein (225 aa).

A signal peptide spans 1-17 (MFSFGIILLTVVSFTNA). Positions 106–206 (PPTNVIVEST…MPLNVKTPDI (101 aa)) constitute a Fibronectin type-III domain.

Component of the organic matrix of calcified shell layers like nacre and prisms.

The protein resides in the secreted. The polypeptide is Fibronectin type III domain-containing protein (Mytilus californianus (California mussel)).